We begin with the raw amino-acid sequence, 493 residues long: Cytochrome P450 2E1 (493 aa).

298-303 (FAGTET) provides a ligand contact to substrate. Cys-437 is a binding site for heme.

Belongs to the cytochrome P450 family. Interacts with chaperones HSP70 and HSP90; this interaction is required for initial targeting to mitochondria. Heme serves as cofactor. As to expression, highest level in the liver and to a lesser extent in the kidney, with a higher level in the male kidney than in the female.

It localises to the endoplasmic reticulum membrane. It is found in the microsome membrane. The protein localises to the mitochondrion inner membrane. It carries out the reaction an organic molecule + reduced [NADPH--hemoprotein reductase] + O2 = an alcohol + oxidized [NADPH--hemoprotein reductase] + H2O + H(+). The enzyme catalyses (5Z,8Z,11Z)-eicosatrienoate + reduced [NADPH--hemoprotein reductase] + O2 = 19-hydroxy-(5Z,8Z,11Z)-eicosatrienoate + oxidized [NADPH--hemoprotein reductase] + H2O + H(+). It catalyses the reaction (5Z,8Z,11Z,14Z,17Z)-eicosapentaenoate + reduced [NADPH--hemoprotein reductase] + O2 = 19-hydroxy-(5Z,8Z,11Z,14Z,17Z)-eicosapentaenoate + oxidized [NADPH--hemoprotein reductase] + H2O + H(+). The catalysed reaction is (4Z,7Z,10Z,13Z,16Z,19Z)-docosahexaenoate + reduced [NADPH--hemoprotein reductase] + O2 = 21-hydroxy-(4Z,7Z,10Z,13Z,16Z,19Z)-docosahexaenoate + oxidized [NADPH--hemoprotein reductase] + H2O + H(+). It carries out the reaction dodecanoate + reduced [NADPH--hemoprotein reductase] + O2 = 11-hydroxydodecanoate + oxidized [NADPH--hemoprotein reductase] + H2O + H(+). The enzyme catalyses tetradecanoate + reduced [NADPH--hemoprotein reductase] + O2 = 13-hydroxytetradecanoate + oxidized [NADPH--hemoprotein reductase] + H2O + H(+). It catalyses the reaction 4-nitrophenol + NADPH + O2 + H(+) = 4-nitrocatechol + NADP(+) + H2O. The protein operates within lipid metabolism; fatty acid metabolism. With respect to regulation, the omega-1 hydroxylase activity is stimulated by cytochrome b5. Functionally, a cytochrome P450 monooxygenase involved in the metabolism of fatty acids. Mechanistically, uses molecular oxygen inserting one oxygen atom into a substrate, and reducing the second into a water molecule, with two electrons provided by NADPH via cytochrome P450 reductase (NADPH--hemoprotein reductase). Catalyzes the hydroxylation of carbon-hydrogen bonds. Hydroxylates fatty acids specifically at the omega-1 position displaying the highest catalytic activity for saturated fatty acids. May be involved in the oxidative metabolism of xenobiotics. This chain is Cytochrome P450 2E1 (Cyp2e1), found in Mus musculus (Mouse).